A 194-amino-acid chain; its full sequence is Phosphoheptose isomerase (194 aa).

One can recognise an SIS domain in the interval 37–194 (ISNSFKQGGK…LIEFEMAKQA (158 aa)). 52–54 (NGG) serves as a coordination point for substrate. The Zn(2+) site is built by His61 and Glu65. Substrate-binding positions include Glu65, 93–94 (ND), 119–121 (STS), Ser124, and Gln172. Gln172 and His180 together coordinate Zn(2+).

The protein belongs to the SIS family. GmhA subfamily. In terms of assembly, homotetramer. Zn(2+) serves as cofactor.

The protein localises to the cytoplasm. The enzyme catalyses 2 D-sedoheptulose 7-phosphate = D-glycero-alpha-D-manno-heptose 7-phosphate + D-glycero-beta-D-manno-heptose 7-phosphate. It functions in the pathway carbohydrate biosynthesis; D-glycero-D-manno-heptose 7-phosphate biosynthesis; D-glycero-alpha-D-manno-heptose 7-phosphate and D-glycero-beta-D-manno-heptose 7-phosphate from sedoheptulose 7-phosphate: step 1/1. Catalyzes the isomerization of sedoheptulose 7-phosphate in D-glycero-D-manno-heptose 7-phosphate. In Haemophilus influenzae (strain PittEE), this protein is Phosphoheptose isomerase.